The sequence spans 1083 residues: Chitin synthase 2 (1083 aa).

2 stretches are compositionally biased toward basic and acidic residues: residues M1–F10 and D18–E30. Disordered regions lie at residues M1–D248 and D260–E294. N-linked (GlcNAc...) asparagine glycosylation occurs at N23. Polar residues-rich tracts occupy residues S38–L49 and A61–S70. N67 carries an N-linked (GlcNAc...) asparagine glycan. Composition is skewed to basic and acidic residues over residues L78–Q100 and R117–P128. Polar residues-rich tracts occupy residues S132–G148, R177–S191, and S282–L292. An N-linked (GlcNAc...) asparagine glycan is attached at N417. Helical transmembrane passes span W708–F728, F747–V767, T785–L805, I820–I840, N860–L880, S889–C909, Y987–Y1007, and F1020–A1040.

It belongs to the chitin synthase family. Class II subfamily.

It is found in the cell membrane. The catalysed reaction is [(1-&gt;4)-N-acetyl-beta-D-glucosaminyl](n) + UDP-N-acetyl-alpha-D-glucosamine = [(1-&gt;4)-N-acetyl-beta-D-glucosaminyl](n+1) + UDP + H(+). In terms of biological role, polymerizes chitin, a structural polymer of the cell wall and septum, by transferring the sugar moiety of UDP-GlcNAc to the non-reducing end of the growing chitin polymer. Plays a critical role in cell wall integrity and virulence. This is Chitin synthase 2 from Fusarium oxysporum f. sp. lycopersici (strain 4287 / CBS 123668 / FGSC 9935 / NRRL 34936) (Fusarium vascular wilt of tomato).